Reading from the N-terminus, the 261-residue chain is Hemin import ATP-binding protein HmuV (261 aa).

The ABC transporter domain occupies 3-239; the sequence is LDAADITVKL…AILSQAYGCA (237 aa). Residue 35-42 participates in ATP binding; the sequence is GPNGSGKT.

This sequence belongs to the ABC transporter superfamily. Heme (hemin) importer (TC 3.A.1.14.5) family. As to quaternary structure, the complex is composed of two ATP-binding proteins (HmuV), two transmembrane proteins (HmuU) and a solute-binding protein (HmuT).

Its subcellular location is the cell inner membrane. Functionally, part of the ABC transporter complex HmuTUV involved in hemin import. Responsible for energy coupling to the transport system. This Roseobacter denitrificans (strain ATCC 33942 / OCh 114) (Erythrobacter sp. (strain OCh 114)) protein is Hemin import ATP-binding protein HmuV.